The primary structure comprises 336 residues: Tryptophan--tRNA ligase (336 aa).

ATP is bound by residues 9–11 and 17–18; these read QPS and GN. The 'HIGH' region motif lies at 10 to 18; it reads PSGTPTIGN. Residue aspartate 134 coordinates L-tryptophan. ATP is bound by residues 146 to 148, isoleucine 189, and 198 to 202; these read GDD and KMSKS. The short motif at 198-202 is the 'KMSKS' region element; that stretch reads KMSKS.

The protein belongs to the class-I aminoacyl-tRNA synthetase family. In terms of assembly, homodimer.

The protein localises to the cytoplasm. The enzyme catalyses tRNA(Trp) + L-tryptophan + ATP = L-tryptophyl-tRNA(Trp) + AMP + diphosphate + H(+). In terms of biological role, catalyzes the attachment of tryptophan to tRNA(Trp). The sequence is that of Tryptophan--tRNA ligase from Enterococcus faecalis (strain ATCC 700802 / V583).